Here is a 278-residue protein sequence, read N- to C-terminus: uncharacterized protein (278 aa).

It belongs to the short-chain dehydrogenases/reductases (SDR) family.

This is an uncharacterized protein from Bacillus subtilis (strain 168).